The following is a 545-amino-acid chain: Membrane protein insertase YidC (545 aa).

Transmembrane regions (helical) follow at residues 10 to 30, 319 to 339, 341 to 361, 407 to 427, 467 to 487, and 502 to 522; these read AIYL…IFFS, LLYF…NVIP, WGLS…PLTF, LGGC…YGLV, ILPF…SNVS, and MPIM…IYWI.

The protein belongs to the OXA1/ALB3/YidC family. Type 1 subfamily. Interacts with the Sec translocase complex via SecD. Specifically interacts with transmembrane segments of nascent integral membrane proteins during membrane integration.

Its subcellular location is the cell inner membrane. Required for the insertion and/or proper folding and/or complex formation of integral membrane proteins into the membrane. Involved in integration of membrane proteins that insert both dependently and independently of the Sec translocase complex, as well as at least some lipoproteins. Aids folding of multispanning membrane proteins. This Borrelia hermsii (strain HS1 / DAH) protein is Membrane protein insertase YidC.